The sequence spans 40 residues: Photosystem II reaction center protein J (40 aa).

Residues isoleucine 8–phenylalanine 28 traverse the membrane as a helical segment.

Belongs to the PsbJ family. In terms of assembly, PSII is composed of 1 copy each of membrane proteins PsbA, PsbB, PsbC, PsbD, PsbE, PsbF, PsbH, PsbI, PsbJ, PsbK, PsbL, PsbM, PsbT, PsbX, PsbY, PsbZ, Psb30/Ycf12, peripheral proteins PsbO, CyanoQ (PsbQ), PsbU, PsbV and a large number of cofactors. It forms dimeric complexes.

The protein localises to the cellular thylakoid membrane. Functionally, one of the components of the core complex of photosystem II (PSII). PSII is a light-driven water:plastoquinone oxidoreductase that uses light energy to abstract electrons from H(2)O, generating O(2) and a proton gradient subsequently used for ATP formation. It consists of a core antenna complex that captures photons, and an electron transfer chain that converts photonic excitation into a charge separation. The chain is Photosystem II reaction center protein J from Nostoc sp. (strain PCC 7120 / SAG 25.82 / UTEX 2576).